The chain runs to 1857 residues: Fer-1-like protein 6 (1857 aa).

Over 1 to 1824 the chain is Cytoplasmic; that stretch reads MFGLKVKKKR…YLIWKNYKKY (1824 aa). A disordered region spans residues 15 to 63; it reads KGLILANKAAKDSQGDTEALQEEPSHQEGPRGDLVHDDASIFPVPSASP. A compositionally biased stretch (basic and acidic residues) spans 37–53; sequence EPSHQEGPRGDLVHDDA. C2 domains are found at residues 65 to 181 and 225 to 356; these read RRSK…QFCN and PIEK…DKGF. Residues 426-447 show a composition bias toward basic and acidic residues; the sequence is SKDKDSKSSKGKDKADKTEDGK. Residues 426-469 form a disordered region; sequence SKDKDSKSSKGKDKADKTEDGKSQQASNKTNSTEVEVESFDVPP. Polar residues predominate over residues 448–459; the sequence is SQQASNKTNSTE. C2 domains follow at residues 810–937 and 969–1099; these read GTNH…RLCY and PVEP…LAPI. Ca(2+) is bound by residues Asp842, Asp848, Asp904, and Asp906. 3 disordered regions span residues 1101-1148, 1161-1203, and 1224-1246; these read QVDG…VVPD, PDSS…RTIA, and AQKAKERNPKGKKGNTEAKPDEV. Over residues 1113-1129 the composition is skewed to polar residues; sequence DSLTATESSGAHSSSQD. Basic and acidic residues predominate over residues 1178 to 1189; that stretch reads PPKDGKPKDPRK. Residues 1190-1200 are compositionally biased toward basic residues; that stretch reads PSRRSTKRRKR. Residues 1226-1245 show a composition bias toward basic and acidic residues; it reads KAKERNPKGKKGNTEAKPDE. C2 domains lie at 1338–1457 and 1578–1729; these read DSGQ…AICG and DMPQ…KACD. Asp1372, Asp1378, Asp1427, Asp1429, and Asp1435 together coordinate Ca(2+). The chain crosses the membrane as a helical span at residues 1825–1845; sequence IIIAFILIILIIFLVLFIYTL. The Extracellular segment spans residues 1846-1857; the sequence is PGAISRRIVVGS.

Belongs to the ferlin family. It depends on Ca(2+) as a cofactor.

It is found in the membrane. This Homo sapiens (Human) protein is Fer-1-like protein 6 (FER1L6).